The chain runs to 112 residues: Large ribosomal subunit protein uL22 (112 aa).

This sequence belongs to the universal ribosomal protein uL22 family. Part of the 50S ribosomal subunit.

In terms of biological role, this protein binds specifically to 23S rRNA; its binding is stimulated by other ribosomal proteins, e.g. L4, L17, and L20. It is important during the early stages of 50S assembly. It makes multiple contacts with different domains of the 23S rRNA in the assembled 50S subunit and ribosome. The globular domain of the protein is located near the polypeptide exit tunnel on the outside of the subunit, while an extended beta-hairpin is found that lines the wall of the exit tunnel in the center of the 70S ribosome. The chain is Large ribosomal subunit protein uL22 from Moorella thermoacetica (strain ATCC 39073 / JCM 9320).